We begin with the raw amino-acid sequence, 295 residues long: Formamidopyrimidine-DNA glycosylase (295 aa).

Pro2 serves as the catalytic Schiff-base intermediate with DNA. Catalysis depends on Glu3, which acts as the Proton donor. Lys61 serves as the catalytic Proton donor; for beta-elimination activity. His95, Arg117, and Arg159 together coordinate DNA. An FPG-type zinc finger spans residues 245 to 279; the sequence is HAYGREGEACERCGTPIRRVAFMNRSSYFCPVCQP. Arg269 functions as the Proton donor; for delta-elimination activity in the catalytic mechanism.

The protein belongs to the FPG family. As to quaternary structure, monomer. Zn(2+) serves as cofactor.

It carries out the reaction Hydrolysis of DNA containing ring-opened 7-methylguanine residues, releasing 2,6-diamino-4-hydroxy-5-(N-methyl)formamidopyrimidine.. It catalyses the reaction 2'-deoxyribonucleotide-(2'-deoxyribose 5'-phosphate)-2'-deoxyribonucleotide-DNA = a 3'-end 2'-deoxyribonucleotide-(2,3-dehydro-2,3-deoxyribose 5'-phosphate)-DNA + a 5'-end 5'-phospho-2'-deoxyribonucleoside-DNA + H(+). Involved in base excision repair of DNA damaged by oxidation or by mutagenic agents. Acts as a DNA glycosylase that recognizes and removes damaged bases. Has a preference for oxidized purines, such as 7,8-dihydro-8-oxoguanine (8-oxoG). Has AP (apurinic/apyrimidinic) lyase activity and introduces nicks in the DNA strand. Cleaves the DNA backbone by beta-delta elimination to generate a single-strand break at the site of the removed base with both 3'- and 5'-phosphates. The polypeptide is Formamidopyrimidine-DNA glycosylase (Nocardioides sp. (strain ATCC BAA-499 / JS614)).